Consider the following 323-residue polypeptide: COP9 signalosome complex subunit 6 (323 aa).

One can recognise an MPN domain in the interval 37–170; that stretch reads VALHPLVILN…VSVFESVIDI (134 aa).

This sequence belongs to the peptidase M67A family. CSN6 subfamily. As to quaternary structure, component of the CSN complex, composed of COPS1/GPS1, COPS2, COPS3, COPS4, COPS5, COPS6, COPS7 (COPS7A or COPS7B), COPS8 and COPS9. In the complex, it probably interacts directly with COPS2, COPS4, COPS5, COPS7 (COPS7A or COPS7B) and COPS9. Interacts with the translation initiation factor EIF3S6. Interacts weakly with RBX1. Directly interacts with COP1 and 14-3-3 protein sigma/SFN. Interacts with ERCC6.

It localises to the cytoplasm. Its subcellular location is the nucleus. Component of the COP9 signalosome complex (CSN), a complex involved in various cellular and developmental processes. The CSN complex is an essential regulator of the ubiquitin (Ubl) conjugation pathway by mediating the deneddylation of the cullin subunits of SCF-type E3 ligase complexes, leading to decrease the Ubl ligase activity of SCF-type complexes such as SCF, CSA or DDB2. The complex is also involved in phosphorylation of p53/TP53, c-jun/JUN, IkappaBalpha/NFKBIA, ITPK1 and IRF8, possibly via its association with CK2 and PKD kinases. CSN-dependent phosphorylation of TP53 and JUN promotes and protects degradation by the Ubl system, respectively. Has some glucocorticoid receptor-responsive activity. Stabilizes COP1 through reducing COP1 auto-ubiquitination and decelerating COP1 turnover rate, hence regulates the ubiquitination of COP1 targets, including SFN. The sequence is that of COP9 signalosome complex subunit 6 (COPS6) from Sus scrofa (Pig).